The sequence spans 408 residues: uncharacterized protein (408 aa).

The interval 49–77 (PRSSPEVQRKATAGENSEVGSPESSLSTS) is disordered. A compositionally biased stretch (polar residues) spans 62–77 (GENSEVGSPESSLSTS). The F-box domain maps to 124 to 170 (SFEFMQLPDTDICQIMSFLDAQSLLNLSQTCSHLRQLCLAHEDNAGK).

This is an uncharacterized protein from Caenorhabditis elegans.